Reading from the N-terminus, the 314-residue chain is MSRPRRRGRDINGVLLLDKPQGMSSNDALQKVKRIYNANRAGHTGALDPLATGMLPICFGEATKFSQYLLDSDKRYRVIARLGQRTDTSDADGQIVEERPVTFSAEQLAAALDTFRGDIEQIPSMYSALKYQGKKLYEYARQGIEVPREARPITIYELLFIRHEGNELELEIHCSKGTYIRTIIDDLGEKLGCGAHVIYLRRLAVSKYPVERMVTLEHLRELVEQAEQQDIPAAELLDPLLMPMDSPASDYPVVNLPLTSSVYFKNGNPVRTSGAPLEGLVRVTEGENGKFIGMGEIDDEGRVAPRRLVVEYPA.

Histidine 43 is a binding site for substrate. The active-site Nucleophile is aspartate 48. Positions 76, 179, and 200 each coordinate substrate.

It belongs to the pseudouridine synthase TruB family. Type 1 subfamily.

The enzyme catalyses uridine(55) in tRNA = pseudouridine(55) in tRNA. In terms of biological role, responsible for synthesis of pseudouridine from uracil-55 in the psi GC loop of transfer RNAs. This chain is tRNA pseudouridine synthase B, found in Shigella boydii serotype 4 (strain Sb227).